Consider the following 425-residue polypeptide: Lipoyl synthase, mitochondrial (425 aa).

A mitochondrion-targeting transit peptide spans 1–33; sequence MAASSTRLRCLYASSSTWKTSPSQSLISLSRRY. The disordered stretch occupies residues 17 to 55; sequence TWKTSPSQSLISLSRRYATTSSAPPTPSDESSSTLPKRR. Residues 33-51 show a composition bias toward polar residues; that stretch reads YATTSSAPPTPSDESSSTL. [4Fe-4S] cluster is bound by residues cysteine 142, cysteine 147, cysteine 153, cysteine 173, cysteine 177, cysteine 180, and serine 388. Residues 156–377 enclose the Radical SAM core domain; sequence GSDKSAATAT…RQRALEMGFL (222 aa).

Belongs to the radical SAM superfamily. Lipoyl synthase family. It depends on [4Fe-4S] cluster as a cofactor.

It localises to the mitochondrion. The catalysed reaction is [[Fe-S] cluster scaffold protein carrying a second [4Fe-4S](2+) cluster] + N(6)-octanoyl-L-lysyl-[protein] + 2 oxidized [2Fe-2S]-[ferredoxin] + 2 S-adenosyl-L-methionine + 4 H(+) = [[Fe-S] cluster scaffold protein] + N(6)-[(R)-dihydrolipoyl]-L-lysyl-[protein] + 4 Fe(3+) + 2 hydrogen sulfide + 2 5'-deoxyadenosine + 2 L-methionine + 2 reduced [2Fe-2S]-[ferredoxin]. It participates in protein modification; protein lipoylation via endogenous pathway; protein N(6)-(lipoyl)lysine from octanoyl-[acyl-carrier-protein]: step 2/2. Functionally, catalyzes the radical-mediated insertion of two sulfur atoms into the C-6 and C-8 positions of the octanoyl moiety bound to the lipoyl domains of lipoate-dependent enzymes, thereby converting the octanoylated domains into lipoylated derivatives. This is Lipoyl synthase, mitochondrial from Talaromyces marneffei (strain ATCC 18224 / CBS 334.59 / QM 7333) (Penicillium marneffei).